A 467-amino-acid polypeptide reads, in one-letter code: UDP-glycosyltransferase 71D1 (467 aa).

The active-site Proton acceptor is the H16. Position 16 (H16) interacts with an anthocyanidin. Residue D122 is the Charge relay of the active site. Residues T144, Q341, H356, W359, N360, S361, and E364 each coordinate UDP-alpha-D-glucose. An anthocyanidin is bound at residue A379. Positions 380 and 381 each coordinate UDP-alpha-D-glucose.

The protein belongs to the UDP-glycosyltransferase family.

It carries out the reaction a flavonol + UDP-alpha-D-glucose = a flavonol 3-O-beta-D-glucoside + UDP + H(+). In terms of biological role, possesses quercetin 3-O-glucosyltransferase activity in vitro. This Arabidopsis thaliana (Mouse-ear cress) protein is UDP-glycosyltransferase 71D1 (UGT71D1).